Reading from the N-terminus, the 81-residue chain is MSDQFSNAQHQLDALGLRCPEPVMMVRKSVRRMDDGETLLIIADDPATTRDIPSFCEFMDHTLIASQTDATPYQYLIRKGL.

The Cysteine persulfide intermediate role is filled by Cys-19.

The protein belongs to the sulfur carrier protein TusA family.

Its subcellular location is the cytoplasm. Sulfur carrier protein which probably makes part of a sulfur-relay system. The polypeptide is Sulfur carrier protein TusA (Shewanella piezotolerans (strain WP3 / JCM 13877)).